A 708-amino-acid polypeptide reads, in one-letter code: Glycine--tRNA ligase beta subunit (708 aa).

It belongs to the class-II aminoacyl-tRNA synthetase family. In terms of assembly, tetramer of two alpha and two beta subunits.

It localises to the cytoplasm. It carries out the reaction tRNA(Gly) + glycine + ATP = glycyl-tRNA(Gly) + AMP + diphosphate. This chain is Glycine--tRNA ligase beta subunit, found in Methylobacillus flagellatus (strain ATCC 51484 / DSM 6875 / VKM B-1610 / KT).